We begin with the raw amino-acid sequence, 875 residues long: Alanine--tRNA ligase (875 aa).

Positions 564, 568, 666, and 670 each coordinate Zn(2+).

The protein belongs to the class-II aminoacyl-tRNA synthetase family. Zn(2+) serves as cofactor.

Its subcellular location is the cytoplasm. It carries out the reaction tRNA(Ala) + L-alanine + ATP = L-alanyl-tRNA(Ala) + AMP + diphosphate. Functionally, catalyzes the attachment of alanine to tRNA(Ala) in a two-step reaction: alanine is first activated by ATP to form Ala-AMP and then transferred to the acceptor end of tRNA(Ala). Also edits incorrectly charged Ser-tRNA(Ala) and Gly-tRNA(Ala) via its editing domain. This is Alanine--tRNA ligase from Mannheimia succiniciproducens (strain KCTC 0769BP / MBEL55E).